Consider the following 389-residue polypeptide: Chalcone synthase H2 (389 aa).

Cysteine 164 is an active-site residue.

Belongs to the thiolase-like superfamily. Chalcone/stilbene synthases family.

The protein resides in the cytoplasm. It carries out the reaction (E)-4-coumaroyl-CoA + 3 malonyl-CoA + 3 H(+) = 2',4,4',6'-tetrahydroxychalcone + 3 CO2 + 4 CoA. It functions in the pathway secondary metabolite biosynthesis; flavonoid biosynthesis. Functionally, involved in the biosynthesis of prenylated phenolics natural products which contribute to the bitter taste of beer and display broad biological activities. Chalcone synthase that can use 4-coumaroyl-CoA to produce 4,2',4',6'-tetrahydroxychalcone (also termed naringenin-chalcone or chalcone) which can, under specific conditions, spontaneously isomerize into naringenin. This is Chalcone synthase H2 from Humulus lupulus (European hop).